The sequence spans 107 residues: Nucleoid-associated protein RF_1365 (107 aa).

The protein belongs to the YbaB/EbfC family. In terms of assembly, homodimer.

The protein resides in the cytoplasm. The protein localises to the nucleoid. In terms of biological role, binds to DNA and alters its conformation. May be involved in regulation of gene expression, nucleoid organization and DNA protection. The sequence is that of Nucleoid-associated protein RF_1365 from Rickettsia felis (strain ATCC VR-1525 / URRWXCal2) (Rickettsia azadi).